A 79-amino-acid polypeptide reads, in one-letter code: Large ribosomal subunit protein bL31 (79 aa).

The protein belongs to the bacterial ribosomal protein bL31 family. Type A subfamily. Part of the 50S ribosomal subunit.

In terms of biological role, binds the 23S rRNA. This Rickettsia bellii (strain RML369-C) protein is Large ribosomal subunit protein bL31 (rpmE).